The sequence spans 535 residues: Glucans biosynthesis protein D 1 (535 aa).

The tat-type signal signal peptide spans 1–28 (MHRRDLLKQLAAGFLALAPGLTPSTASA). The segment at 275-287 (RTDRAGDRQSAAR) is insert.

Belongs to the OpgD/OpgG family. Predicted to be exported by the Tat system. The position of the signal peptide cleavage has not been experimentally proven.

Its subcellular location is the periplasm. The protein operates within glycan metabolism; osmoregulated periplasmic glucan (OPG) biosynthesis. Functionally, probably involved in the control of the structural glucose backbone of osmoregulated periplasmic glucans (OPGs). The sequence is that of Glucans biosynthesis protein D 1 (opgD1) from Ralstonia nicotianae (strain ATCC BAA-1114 / GMI1000) (Ralstonia solanacearum).